The sequence spans 463 residues: FAD-dependent monooxygenase ausM (463 aa).

E40, G54, and R113 together coordinate FAD. The active site involves Y217. Positions 309 and 322 each coordinate FAD. A helical transmembrane segment spans residues 443 to 463 (VPWLVISLPVLASVLCYLMFA).

The protein belongs to the paxM FAD-dependent monooxygenase family. The cofactor is FAD.

The protein resides in the membrane. Its pathway is secondary metabolite biosynthesis; terpenoid biosynthesis. FAD-dependent monooxygenase; part of the gene cluster that mediates the biosynthesis of calidodehydroaustin, a fungal meroterpenoid. The first step of the pathway is the synthesis of 3,5-dimethylorsellinic acid by the polyketide synthase ausA. 3,5-dimethylorsellinic acid is then prenylated by the polyprenyl transferase ausN. Further epoxidation by the FAD-dependent monooxygenase ausM and cyclization by the probable terpene cyclase ausL lead to the formation of protoaustinoid A. Protoaustinoid A is then oxidized to spiro-lactone preaustinoid A3 by the combined action of the FAD-binding monooxygenases ausB and ausC, and the dioxygenase ausE. Acid-catalyzed keto-rearrangement and ring contraction of the tetraketide portion of preaustinoid A3 by ausJ lead to the formation of preaustinoid A4. The aldo-keto reductase ausK, with the help of ausH, is involved in the next step by transforming preaustinoid A4 into isoaustinone which is in turn hydroxylated by the P450 monooxygenase ausI to form austinolide. The cytochrome P450 monooxygenase ausG modifies austinolide to austinol. Austinol is further acetylated to austin by the O-acetyltransferase ausP, which spontaneously changes to dehydroaustin. The cytochrome P450 monooxygenase ausR then converts dehydroaustin is into 7-dehydrodehydroaustin. The hydroxylation catalyzed by ausR permits the O-acetyltransferase ausQ to add an additional acetyl group to the molecule, leading to the formation of acetoxydehydroaustin. The short chain dehydrogenase ausT catalyzes the reduction of the double bond present between carbon atoms 1 and 2 to convert 7-dehydrodehydroaustin into 1,2-dihydro-7-hydroxydehydroaustin. AusQ catalyzes not only an acetylation reaction but also the addition of the PKS ausV diketide product to 1,2-dihydro-7-hydroxydehydroaustin, forming precalidodehydroaustin. Finally, the iron/alpha-ketoglutarate-dependent dioxygenase converts precalidodehydroaustin into calidodehydroaustin. The sequence is that of FAD-dependent monooxygenase ausM from Aspergillus calidoustus.